A 1252-amino-acid chain; its full sequence is Myosin-3 (1252 aa).

In terms of domain architecture, Myosin motor spans 36 to 715; it reads VGVSDLTLLS…TLFALENMRD (680 aa). Residue 129–136 coordinates ATP; sequence GESGAGKT. Serine 357 is modified (phosphoserine). Residues 404–486 are actin-binding; the sequence is SIGILDIYGF…PGIFAAMNDA (83 aa). 2 consecutive IQ domains span residues 719 to 739 and 740 to 767; these read YNMA…RIDA and AIRI…AGDK. In terms of domain architecture, TH1 spans 773 to 963; that stretch reads KERRNMSLLG…TILVRHGNPP (191 aa). 3 disordered regions span residues 988–1086, 1106–1136, and 1203–1252; these read KTMK…KTSV, YSLP…PSEL, and INEP…DDDW. Low complexity predominate over residues 997–1016; the sequence is KRTPQALPTSSLAASAAQAA. 3 stretches are compositionally biased toward polar residues: residues 1050–1063, 1106–1121, and 1203–1219; these read PVRN…NSKV, YSLP…TDSY, and INEP…NTDL. An SH3 domain is found at 1116 to 1178; it reads SQTDSYQAAY…PTSYIVKYNG (63 aa). Over residues 1238 to 1252 the composition is skewed to acidic residues; the sequence is SEEDISREEDDDDDW.

Belongs to the TRAFAC class myosin-kinesin ATPase superfamily. Myosin family. In terms of processing, phosphorylation of the TEDS site (Ser-357) is required for the polarization of the actin cytoskeleton. Phosphorylation probably activates the myosin-I ATPase activity.

The protein localises to the cytoplasm. The protein resides in the cytoskeleton. It localises to the actin patch. Type-I myosin implicated in the organization of the actin cytoskeleton. Required for proper actin cytoskeleton polarization. At the cell cortex, assembles in patch-like structures together with proteins from the actin-polymerizing machinery and promotes actin assembly. Functions as actin nucleation-promoting factor (NPF) for the Arp2/3 complex. In Candida glabrata (strain ATCC 2001 / BCRC 20586 / JCM 3761 / NBRC 0622 / NRRL Y-65 / CBS 138) (Yeast), this protein is Myosin-3 (MYO3).